Consider the following 406-residue polypeptide: RILP-like protein 1 (406 aa).

The residue at position 7 (Ser-7) is a Phosphoserine. Residues 10 to 97 (AALSALEKNV…RVERMDRIEK (88 aa)) enclose the RH1 domain. At Cys-47 the chain carries S-nitrosocysteine. A coiled-coil region spans residues 76 to 258 (ELDELRLELD…KLRERLQGEH (183 aa)). Disordered regions lie at residues 255–280 (QGEH…ESIS) and 330–354 (EIEE…QPES). The residue at position 259 (Ser-259) is a Phosphoserine. Acidic residues predominate over residues 262-280 (GEEEEAEIPPQPDGEESIS). An RH2 domain is found at 294 to 359 (RPRFTLQELR…PQPESGIKRL (66 aa)).

Belongs to the RILPL family. In terms of assembly, interacts (when S-nitrosylated) with GAPDH. Interacts with RAB8A; interaction is dependent on the phosphorylation of 'Thr-72' of RAB8A. Interacts with RAB10 and RAB12; the interaction is dependent on the phosphorylation of 'Thr-73' of RAB10, and 'Ser-105' of RAB12. In terms of processing, S-nitrosylation is required for the interaction with GAPDH. As to expression, highly expressed in heart, skeletal muscle, brain and lung (at protein level).

It localises to the cytoplasm. The protein resides in the cytosol. The protein localises to the cytoskeleton. Its subcellular location is the microtubule organizing center. It is found in the centrosome. It localises to the centriole. The protein resides in the cilium basal body. In terms of biological role, plays a role in the regulation of cell shape and polarity. Plays a role in cellular protein transport, including protein transport away from primary cilia. Neuroprotective protein, which acts by sequestring GAPDH in the cytosol and prevent the apoptotic function of GAPDH in the nucleus. Competes with SIAH1 for binding GAPDH. Does not regulate lysosomal morphology and distribution. Binds to RAB10 following LRRK2-mediated RAB10 phosphorylation which leads to inhibition of ciliogenesis. The protein is RILP-like protein 1 (Rilpl1) of Rattus norvegicus (Rat).